The following is a 283-amino-acid chain: Phosphatidylserine decarboxylase proenzyme (283 aa).

Active-site charge relay system; for autoendoproteolytic cleavage activity residues include D96, H152, and S250. S250 functions as the Schiff-base intermediate with substrate; via pyruvic acid; for decarboxylase activity in the catalytic mechanism. S250 is subject to Pyruvic acid (Ser); by autocatalysis.

This sequence belongs to the phosphatidylserine decarboxylase family. PSD-B subfamily. Prokaryotic type I sub-subfamily. As to quaternary structure, heterodimer of a large membrane-associated beta subunit and a small pyruvoyl-containing alpha subunit. Pyruvate is required as a cofactor. Post-translationally, is synthesized initially as an inactive proenzyme. Formation of the active enzyme involves a self-maturation process in which the active site pyruvoyl group is generated from an internal serine residue via an autocatalytic post-translational modification. Two non-identical subunits are generated from the proenzyme in this reaction, and the pyruvate is formed at the N-terminus of the alpha chain, which is derived from the carboxyl end of the proenzyme. The autoendoproteolytic cleavage occurs by a canonical serine protease mechanism, in which the side chain hydroxyl group of the serine supplies its oxygen atom to form the C-terminus of the beta chain, while the remainder of the serine residue undergoes an oxidative deamination to produce ammonia and the pyruvoyl prosthetic group on the alpha chain. During this reaction, the Ser that is part of the protease active site of the proenzyme becomes the pyruvoyl prosthetic group, which constitutes an essential element of the active site of the mature decarboxylase.

The protein localises to the cell membrane. The enzyme catalyses a 1,2-diacyl-sn-glycero-3-phospho-L-serine + H(+) = a 1,2-diacyl-sn-glycero-3-phosphoethanolamine + CO2. The protein operates within phospholipid metabolism; phosphatidylethanolamine biosynthesis; phosphatidylethanolamine from CDP-diacylglycerol: step 2/2. Its function is as follows. Catalyzes the formation of phosphatidylethanolamine (PtdEtn) from phosphatidylserine (PtdSer). The polypeptide is Phosphatidylserine decarboxylase proenzyme (Acinetobacter baumannii (strain ACICU)).